Here is a 1423-residue protein sequence, read N- to C-terminus: Protein phosphatase Slingshot homolog 2 (1423 aa).

Disordered stretches follow at residues Met-1–Ile-37 and Leu-51–Ala-70. Positions Ser-9 to Pro-18 are enriched in low complexity. Phosphoserine is present on residues Ser-17, Ser-25, and Ser-36. Residues Glu-248 to Gly-303 form the DEK-C domain. In terms of domain architecture, Tyrosine-protein phosphatase spans Ser-307–Ala-448. Cys-392 (phosphocysteine intermediate) is an active-site residue. Ser-461, Ser-487, Ser-534, Ser-631, and Ser-633 each carry phosphoserine. Disordered regions lie at residues Glu-698–Gln-725, His-833–Gly-858, Arg-878–Arg-950, Ala-967–Val-991, Ser-1021–Leu-1042, Pro-1074–Cys-1105, and Pro-1207–His-1226. Residues His-884 to Ser-904 are compositionally biased toward polar residues. Basic and acidic residues-rich tracts occupy residues Pro-910–Lys-932, Ser-976–Lys-987, and Pro-1033–Leu-1042. Ser-1217 is modified (phosphoserine). The residue at position 1422 (Thr-1422) is a Phosphothreonine.

This sequence belongs to the protein-tyrosine phosphatase family. As to quaternary structure, interacts with filamentous actin. Expressed in brain, heart, liver, skeletal muscle, testis and thymus. Also expressed at lower levels in kidney, small intestine and spleen. Within testicular seminiferous tubules expressed in germ cells and spermatocytes, where it has a cytoplasmic localization, and round spermatids, where it concentrates in the acrosomal region next to the nucleus.

The protein resides in the cytoplasm. It localises to the cytoskeleton. Its subcellular location is the cell junction. It is found in the focal adhesion. The protein localises to the cytoplasmic vesicle. The protein resides in the secretory vesicle. It localises to the acrosome. The catalysed reaction is O-phospho-L-tyrosyl-[protein] + H2O = L-tyrosyl-[protein] + phosphate. The enzyme catalyses O-phospho-L-seryl-[protein] + H2O = L-seryl-[protein] + phosphate. It carries out the reaction O-phospho-L-threonyl-[protein] + H2O = L-threonyl-[protein] + phosphate. Functionally, protein phosphatase which regulates actin filament dynamics. Dephosphorylates and activates the actin binding/depolymerizing factor cofilin, which subsequently binds to actin filaments and stimulates their disassembly. Inhibitory phosphorylation of cofilin is mediated by LIMK1, which may also be dephosphorylated and inactivated by this protein. Required for spermatogenesis. Involved in acrosome biogenesis, probably by regulating cofilin-mediated actin cytoskeleton remodeling during proacrosomal vesicle fusion and/or Golgi to perinuclear vesicle trafficking. This Mus musculus (Mouse) protein is Protein phosphatase Slingshot homolog 2 (Ssh2).